Reading from the N-terminus, the 58-residue chain is UPF0434 protein Swoo_1821 (58 aa).

This sequence belongs to the UPF0434 family.

The chain is UPF0434 protein Swoo_1821 from Shewanella woodyi (strain ATCC 51908 / MS32).